The following is a 1369-amino-acid chain: DNA-directed RNA polymerase subunit beta' (1369 aa).

A disordered region spans residues Met1–Ala26. Residues Lys7–Lys24 show a composition bias toward basic residues. Zn(2+) is bound by residues Cys253, Cys320, Cys327, and Cys330. The interval Thr1294–Glu1369 is disordered. Residues Asp1342 to Met1351 show a composition bias toward acidic residues. Over residues Leu1357–Glu1369 the composition is skewed to low complexity.

It belongs to the RNA polymerase beta' chain family. RpoC2 subfamily. In cyanobacteria the RNAP catalytic core is composed of 2 alpha, 1 beta, 1 beta', 1 gamma and 1 omega subunit. When a sigma factor is associated with the core the holoenzyme is formed, which can initiate transcription. Zn(2+) is required as a cofactor.

The enzyme catalyses RNA(n) + a ribonucleoside 5'-triphosphate = RNA(n+1) + diphosphate. DNA-dependent RNA polymerase catalyzes the transcription of DNA into RNA using the four ribonucleoside triphosphates as substrates. The polypeptide is DNA-directed RNA polymerase subunit beta' (Prochlorococcus marinus (strain NATL2A)).